Consider the following 188-residue polypeptide: dCTP deaminase, dUMP-forming (188 aa).

DCTP contacts are provided by residues 101-106 (KSSLGR), aspartate 119, 127-129 (TLE), glutamine 148, tyrosine 162, and glutamine 174. The Proton donor/acceptor role is filled by glutamate 129.

This sequence belongs to the dCTP deaminase family. Homotrimer.

It carries out the reaction dCTP + 2 H2O = dUMP + NH4(+) + diphosphate. The protein operates within pyrimidine metabolism; dUMP biosynthesis; dUMP from dCTP: step 1/1. In terms of biological role, bifunctional enzyme that catalyzes both the deamination of dCTP to dUTP and the hydrolysis of dUTP to dUMP without releasing the toxic dUTP intermediate. The chain is dCTP deaminase, dUMP-forming from Corynebacterium jeikeium (strain K411).